Here is a 71-residue protein sequence, read N- to C-terminus: MHIVVCIKQFPGFGRLVSSSSGRRQLTATQPRSDPESQRGRTSSNRLTWRGALEWPRAASALDLGIFPSRR.

Residues 20 to 32 are compositionally biased toward polar residues; sequence SSGRRQLTATQPR. A disordered region spans residues 20-46; that stretch reads SSGRRQLTATQPRSDPESQRGRTSSNR.

This is an uncharacterized protein from Rhizobium leguminosarum.